The following is a 130-amino-acid chain: Small ribosomal subunit protein uS9 (130 aa).

It belongs to the universal ribosomal protein uS9 family.

This Clostridium perfringens (strain ATCC 13124 / DSM 756 / JCM 1290 / NCIMB 6125 / NCTC 8237 / Type A) protein is Small ribosomal subunit protein uS9.